We begin with the raw amino-acid sequence, 177 residues long: Antigen TpF1 (177 aa).

It belongs to the Dps family. Homodecamer; either linked or stabilized by disulfide bonds.

Functionally, may play an important structural role in the outer membrane. The chain is Antigen TpF1 (tpf1) from Treponema pallidum (strain Nichols).